Here is a 384-residue protein sequence, read N- to C-terminus: MNKRHSGQRVVVGLSGGVDSAVTAWLLKQQGYEVIGIFMKNWEDDDDSEYCSSNVDFIDAAAVADVIGIEIEHVNFAAEYKDRVFAEFLREYQAGRTPNPDILCNAEIKFKAFLDHALRLGAQKIATGHYARVRCVAADGRVLDAAQAQMSDGRFELLKGLDPSKDQSYFLHRLNQAQLSKTLFPVGELLKTEVRRLALEIGLPNAKKKDSTGICFIGERPFRDFLNRYIAREPGPIKDDKGRTIGQHVGLSFYTLGQRQGLGIGGLKAKGAQRGGGEHAPWFVARKDLATNTLWVVQGHEHPWLQSHGLSAQDASWVAGTAPQAGRFSAKTRYRQLDAPCTLAAGAGAAFHLSFPEPQWAVTPGQSAVLYDDEVCLGGGVIAA.

ATP-binding positions include 13–20 and Met-39; that span reads GLSGGVDS. Residues 99–101 form an interaction with target base in tRNA region; it reads NPD. Residue Cys-104 is the Nucleophile of the active site. Residues Cys-104 and Cys-215 are joined by a disulfide bond. Residue Gly-128 participates in ATP binding. The interaction with tRNA stretch occupies residues 165 to 167; it reads KDQ. The active-site Cysteine persulfide intermediate is Cys-215. An interaction with tRNA region spans residues 333 to 334; it reads RY.

Belongs to the MnmA/TRMU family.

It localises to the cytoplasm. The catalysed reaction is S-sulfanyl-L-cysteinyl-[protein] + uridine(34) in tRNA + AH2 + ATP = 2-thiouridine(34) in tRNA + L-cysteinyl-[protein] + A + AMP + diphosphate + H(+). Catalyzes the 2-thiolation of uridine at the wobble position (U34) of tRNA, leading to the formation of s(2)U34. The polypeptide is tRNA-specific 2-thiouridylase MnmA (Albidiferax ferrireducens (strain ATCC BAA-621 / DSM 15236 / T118) (Rhodoferax ferrireducens)).